A 300-amino-acid polypeptide reads, in one-letter code: GTPase Era (300 aa).

The 169-residue stretch at 4–172 (KSGFVALIGR…LEKIKKLLPE (169 aa)) folds into the Era-type G domain. Residues 12–19 (GRPNVGKS) are G1. 12-19 (GRPNVGKS) contributes to the GTP binding site. The G2 stretch occupies residues 38 to 42 (QTTRN). Positions 59–62 (DTPG) are G3. GTP contacts are provided by residues 59-63 (DTPGV) and 122-125 (NKAD). The tract at residues 122–125 (NKAD) is G4. The segment at 151 to 153 (IAA) is G5. Residues 195-281 (IREKILLNLS…NLQLWVKVKK (87 aa)) enclose the KH type-2 domain.

It belongs to the TRAFAC class TrmE-Era-EngA-EngB-Septin-like GTPase superfamily. Era GTPase family. In terms of assembly, monomer.

It is found in the cytoplasm. The protein localises to the cell membrane. An essential GTPase that binds both GDP and GTP, with rapid nucleotide exchange. Plays a role in 16S rRNA processing and 30S ribosomal subunit biogenesis and possibly also in cell cycle regulation and energy metabolism. The sequence is that of GTPase Era from Caldicellulosiruptor saccharolyticus (strain ATCC 43494 / DSM 8903 / Tp8T 6331).